The primary structure comprises 359 residues: DNA replication and repair protein RecF (359 aa).

An ATP-binding site is contributed by 30 to 37 (GQNAQGKT).

This sequence belongs to the RecF family.

It localises to the cytoplasm. The RecF protein is involved in DNA metabolism; it is required for DNA replication and normal SOS inducibility. RecF binds preferentially to single-stranded, linear DNA. It also seems to bind ATP. The chain is DNA replication and repair protein RecF from Lactococcus lactis subsp. cremoris (strain MG1363).